We begin with the raw amino-acid sequence, 251 residues long: Large ribosomal subunit protein uL2 (251 aa).

The span at 1–12 shows a compositional bias: basic residues; the sequence is MGKRLRVQRHGR. Residues 1 to 22 are disordered; the sequence is MGKRLRVQRHGRGTPQWRNRGH.

The protein belongs to the universal ribosomal protein uL2 family. As to quaternary structure, part of the 50S ribosomal subunit. Forms a bridge to the 30S subunit in the 70S ribosome.

One of the primary rRNA binding proteins. Required for association of the 30S and 50S subunits to form the 70S ribosome, for tRNA binding and peptide bond formation. It has been suggested to have peptidyltransferase activity; this is somewhat controversial. Makes several contacts with the 16S rRNA in the 70S ribosome. The sequence is that of Large ribosomal subunit protein uL2 from Ignicoccus hospitalis (strain KIN4/I / DSM 18386 / JCM 14125).